Consider the following 559-residue polypeptide: Prolyl 4-hydroxylase subunit alpha-1 (559 aa).

The N-terminal stretch at 1-16 is a signal peptide; that stretch reads MRLALLVLATIGYAVA. A glycan (N-linked (GlcNAc...) asparagine) is linked at asparagine 158. The region spanning 404-512 is the Fe2OG dioxygenase domain; sequence TAEELQIANY…KWVSNKWIHE (109 aa). Residues histidine 422, aspartate 424, and histidine 493 each coordinate Fe cation. Lysine 503 contacts 2-oxoglutarate.

Belongs to the P4HA family. Heterotetramer of two alpha chains and two beta chains. Exists either as a phy-1(2)/pdi-2(2) tetramer or as a phy-1/phy-2/pdi-2(2) tetramer. Fe(2+) is required as a cofactor. The cofactor is L-ascorbate.

The protein localises to the endoplasmic reticulum lumen. It catalyses the reaction L-prolyl-[collagen] + 2-oxoglutarate + O2 = trans-4-hydroxy-L-prolyl-[collagen] + succinate + CO2. In terms of biological role, catalyzes the post-translational formation of 4-hydroxyproline in -Xaa-Pro-Gly- sequences in collagens and other proteins. The sequence is that of Prolyl 4-hydroxylase subunit alpha-1 (dpy-18) from Caenorhabditis elegans.